The chain runs to 251 residues: HTH-type transcriptional regulator UlaR (251 aa).

One can recognise an HTH deoR-type domain in the interval 3 to 58 (EAQRHQILLEMLAQLGFVTVEKVVERLGISPATARRDINKLDESGKLKKVRNGAEA). The H-T-H motif DNA-binding region spans 20–39 (VTVEKVVERLGISPATARRD).

It localises to the cytoplasm. Its function is as follows. Represses ulaG and the ulaABCDEF operon. This Escherichia coli O127:H6 (strain E2348/69 / EPEC) protein is HTH-type transcriptional regulator UlaR.